Consider the following 878-residue polypeptide: Protein translocase subunit SecA (878 aa).

ATP-binding positions include Gln-79, Gly-97–Thr-101, and Asp-487.

It belongs to the SecA family.

It is found in the plastid. It localises to the chloroplast stroma. The protein resides in the chloroplast thylakoid membrane. It carries out the reaction ATP + H2O + cellular proteinSide 1 = ADP + phosphate + cellular proteinSide 2.. Functionally, has a central role in coupling the hydrolysis of ATP to the transfer of proteins across the thylakoid membrane. The protein is Protein translocase subunit SecA of Antithamnion sp. (Red alga).